Consider the following 296-residue polypeptide: Ribosomal RNA small subunit methyltransferase H (296 aa).

Residues 41-43 (GGY), aspartate 59, phenylalanine 86, aspartate 104, and glutamine 111 contribute to the S-adenosyl-L-methionine site.

This sequence belongs to the methyltransferase superfamily. RsmH family.

The protein resides in the cytoplasm. It carries out the reaction cytidine(1402) in 16S rRNA + S-adenosyl-L-methionine = N(4)-methylcytidine(1402) in 16S rRNA + S-adenosyl-L-homocysteine + H(+). Its function is as follows. Specifically methylates the N4 position of cytidine in position 1402 (C1402) of 16S rRNA. The protein is Ribosomal RNA small subunit methyltransferase H of Neorickettsia sennetsu (strain ATCC VR-367 / Miyayama) (Ehrlichia sennetsu).